Reading from the N-terminus, the 370-residue chain is Luciferin sulfotransferase (370 aa).

Position 90–95 (90–95 (KAGTTW)) interacts with 3'-phosphoadenylyl sulfate. Catalysis depends on histidine 165, which acts as the Proton acceptor. 3'-phosphoadenylyl sulfate-binding positions include arginine 189, serine 197, tyrosine 250, 284–289 (LSFESM), and 316–320 (FMRSG).

It belongs to the sulfotransferase 1 family.

It carries out the reaction firefly D-luciferin + 3'-phosphoadenylyl sulfate = firefly D-sulfoluciferin + adenosine 3',5'-bisphosphate + H(+). The enzyme catalyses firefly L-luciferin + 3'-phosphoadenylyl sulfate = firefly L-sulfoluciferin + adenosine 3',5'-bisphosphate + H(+). Its activity is regulated as follows. Sulfoluciferin formation is inhibited by the product adenosine 3',5'-bisphosphate. Its function is as follows. Catalyzes the production of firefly sulfoluciferin from luciferin using the sulfo-donor 3'-phosphoadenylyl sulfate (PAPS). Is also able to catalyze the reverse reaction, i.e. the adenosine 3',5'-bisphosphate-dependent desulfonation of sulfoluciferin. Can use either D- or L-luciferin stereoisomer as substrate. Sulfoluciferin, which is not a substrate of P.pyralis luciferase, likely serves as a luciferin storage form in fireflies. In Photinus pyralis (Common eastern firefly), this protein is Luciferin sulfotransferase.